The following is a 285-amino-acid chain: Protoheme IX farnesyltransferase (285 aa).

9 helical membrane-spanning segments follow: residues 13 to 33 (LGKLGVVSLLDLAAVAGAFLA), 40 to 60 (LLPIIPMFIGGTLASMGAMII), 89 to 109 (EAIIVGSLLAILGTALGFIDN), 110 to 130 (ILTAFFIALGVVIYIFVYTIL), 137 to 157 (LNIVIGGFAGSAAAWAGYTSL), 165 to 185 (GFLLGFLIFMWTPGHFWSLAL), 194 to 214 (AHYPMLPAVVGITTSARAIAI), 230 to 252 (INLIALIAFSILSLFLMFLSYRL), and 265 to 285 (FIFSNIYLMLILLIMIIVKLI).

The protein belongs to the UbiA prenyltransferase family. Protoheme IX farnesyltransferase subfamily.

It localises to the cell membrane. It catalyses the reaction heme b + (2E,6E)-farnesyl diphosphate + H2O = Fe(II)-heme o + diphosphate. It functions in the pathway porphyrin-containing compound metabolism; heme O biosynthesis; heme O from protoheme: step 1/1. Functionally, converts heme B (protoheme IX) to heme O by substitution of the vinyl group on carbon 2 of heme B porphyrin ring with a hydroxyethyl farnesyl side group. This chain is Protoheme IX farnesyltransferase, found in Saccharolobus islandicus (strain Y.N.15.51 / Yellowstone #2) (Sulfolobus islandicus).